We begin with the raw amino-acid sequence, 817 residues long: Leucine--tRNA ligase (817 aa).

Residues 42–52 (PYPSGKLHMGH) carry the 'HIGH' region motif. Positions 576 to 580 (KMSKS) match the 'KMSKS' region motif. Lys579 contacts ATP.

It belongs to the class-I aminoacyl-tRNA synthetase family.

The protein resides in the cytoplasm. It catalyses the reaction tRNA(Leu) + L-leucine + ATP = L-leucyl-tRNA(Leu) + AMP + diphosphate. This chain is Leucine--tRNA ligase, found in Methylobacillus flagellatus (strain ATCC 51484 / DSM 6875 / VKM B-1610 / KT).